We begin with the raw amino-acid sequence, 275 residues long: Multi-heme protein MamP (275 aa).

Residues 1–6 lie on the Cytoplasmic side of the membrane; the sequence is MNSKVA. The chain crosses the lipid bilayer at residues 7-20; that stretch reads LLVVGLAVVLALVI. The Lumenal segment spans residues 21–275; the sequence is GRQGPVAPQA…GPCEACHVIK (255 aa). The segment at 89–206 is PDZ; it reads KLKVFEGHWQ…GGLGFAQLEG (118 aa). The MCR (magnetochrome) 1 motif lies at 210-230; the sequence is ILAGDPRPHGYRGACTDCHPI. Heme contacts are provided by Cys224, Cys227, His228, Cys268, Cys271, and His272. An MCR 2 motif is present at residues 250–274; it reads ITRDMVARSVNPHEVRGPCEACHVI.

This sequence belongs to the magnetosome MamP family. In terms of assembly, homodimer. Heme serves as cofactor. Subject to proteolytic cleavage which requires both MamE and MamO.

Its subcellular location is the cell inner membrane. Involved in redox-control of magnetite formation; oxidizes Fe(2+) to Fe(3+) or to mixed-valent Fe(2+)-Fe(3+) oxide minerals. May control magnetite crystal size and number. Overproduction of MamP leads to more crystals than normal during exponential growth of normal size; in stationary phase crystal numbers become wild-type. This chain is Multi-heme protein MamP (mamP), found in Paramagnetospirillum magneticum (strain ATCC 700264 / AMB-1) (Magnetospirillum magneticum).